The sequence spans 592 residues: Glutamine-rich protein 2 (592 aa).

Positions 488-592 (QLQQAQHARP…TRGPRSTAAH (105 aa)) are disordered. A compositionally biased stretch (polar residues) spans 544-567 (LQSNVSHSSIPTDIASLQGSQQGL).

Interacts with AKAP3, ODF2 and TSSK4. Interacts with AKAP4. Expressed in testis. Not detected in heart, brain, kidney, stomach, ovary, liver, lung and uterus.

Its subcellular location is the nucleus membrane. The protein localises to the nucleus. It is found in the cytoplasm. It localises to the cell projection. The protein resides in the cilium. Its subcellular location is the flagellum. Functionally, has an essential role in the formation of sperm flagella and flagellar structure maintainance. It acts as a suppressor of ubiquitination and degradation of proteins involved in flagellar development and motility. The protein is Glutamine-rich protein 2 of Mus musculus (Mouse).